The primary structure comprises 287 residues: Urease accessory protein UreD (287 aa).

Belongs to the UreD family. In terms of assembly, ureD, UreF and UreG form a complex that acts as a GTP-hydrolysis-dependent molecular chaperone, activating the urease apoprotein by helping to assemble the nickel containing metallocenter of UreC. The UreE protein probably delivers the nickel.

The protein resides in the cytoplasm. Its function is as follows. Required for maturation of urease via the functional incorporation of the urease nickel metallocenter. This is Urease accessory protein UreD from Ureaplasma parvum serovar 3 (strain ATCC 27815 / 27 / NCTC 11736).